Consider the following 133-residue polypeptide: Small ribosomal subunit protein uS8 (133 aa).

The tract at residues 1–30 (MANHDPISDMLTRIRNASEKRHETTKVPAS) is disordered. Residues 16 to 25 (NASEKRHETT) are compositionally biased toward basic and acidic residues.

The protein belongs to the universal ribosomal protein uS8 family. In terms of assembly, part of the 30S ribosomal subunit. Contacts proteins S5 and S12.

In terms of biological role, one of the primary rRNA binding proteins, it binds directly to 16S rRNA central domain where it helps coordinate assembly of the platform of the 30S subunit. The chain is Small ribosomal subunit protein uS8 from Synechococcus sp. (strain CC9902).